The sequence spans 427 residues: Glutamate-1-semialdehyde 2,1-aminomutase (427 aa).

The residue at position 265 (lysine 265) is an N6-(pyridoxal phosphate)lysine.

The protein belongs to the class-III pyridoxal-phosphate-dependent aminotransferase family. HemL subfamily. In terms of assembly, homodimer. The cofactor is pyridoxal 5'-phosphate.

The protein localises to the cytoplasm. It carries out the reaction (S)-4-amino-5-oxopentanoate = 5-aminolevulinate. It functions in the pathway porphyrin-containing compound metabolism; protoporphyrin-IX biosynthesis; 5-aminolevulinate from L-glutamyl-tRNA(Glu): step 2/2. The chain is Glutamate-1-semialdehyde 2,1-aminomutase from Burkholderia ambifaria (strain ATCC BAA-244 / DSM 16087 / CCUG 44356 / LMG 19182 / AMMD) (Burkholderia cepacia (strain AMMD)).